Reading from the N-terminus, the 271-residue chain is Cytosolic Fe-S cluster assembly factor NUBP2 (271 aa).

Met1 bears the N-acetylmethionine mark. Position 22–29 (22–29) interacts with ATP; that stretch reads GKGGVGKS. 2 residues coordinate [4Fe-4S] cluster: Cys196 and Cys199.

This sequence belongs to the Mrp/NBP35 ATP-binding proteins family. NUBP2/CFD1 subfamily. In terms of assembly, heterotetramer of 2 NUBP1 and 2 NUBP2 chains. Interacts with KIFC1. Interacts with NUBP1. It depends on [4Fe-4S] cluster as a cofactor.

It is found in the nucleus. The protein localises to the cytoplasm. The protein resides in the cytoskeleton. Its subcellular location is the microtubule organizing center. It localises to the centrosome. It is found in the cilium axoneme. The protein localises to the centriole. In terms of biological role, component of the cytosolic iron-sulfur (Fe/S) protein assembly (CIA) machinery. Required for maturation of extramitochondrial Fe-S proteins. The NUBP1-NUBP2 heterotetramer forms a Fe-S scaffold complex, mediating the de novo assembly of an Fe-S cluster and its transfer to target apoproteins. Negatively regulates cilium formation and structure. In Bos taurus (Bovine), this protein is Cytosolic Fe-S cluster assembly factor NUBP2.